We begin with the raw amino-acid sequence, 126 residues long: Membrane-anchored ubiquitin-fold protein 2 (126 aa).

The Ubiquitin-like domain maps to 14 to 79 (VEVRFRLDDG…VLENNRTLAE (66 aa)). Residue C123 is modified to Cysteine methyl ester. C123 is lipidated: S-geranylgeranyl cysteine. The propeptide at 124-126 (TIL) is removed in mature form.

The protein resides in the cell membrane. Its function is as follows. May serve as docking site to facilitate the association of other proteins to the plasma membrane. The sequence is that of Membrane-anchored ubiquitin-fold protein 2 (MUB2) from Oryza sativa subsp. japonica (Rice).